Reading from the N-terminus, the 100-residue chain is Small ribosomal subunit protein uS14c (100 aa).

This sequence belongs to the universal ribosomal protein uS14 family. As to quaternary structure, part of the 30S ribosomal subunit.

It localises to the plastid. The protein localises to the chloroplast. Functionally, binds 16S rRNA, required for the assembly of 30S particles. This Platanus occidentalis (Sycamore) protein is Small ribosomal subunit protein uS14c.